The chain runs to 56 residues: Bacteriocin sublancin-168 (56 aa).

The propeptide occupies 1-19 (MEKLFKEVKLEELENQKGS). Intrachain disulfides connect C26–C55 and C33–C48. C41 is a glycosylation site (S-linked (Glc) cysteine; by host).

In terms of assembly, monomer. Production of active sublancin-168 requires at least one thiol-disulfide oxidoreductase (BdbB or, in its absence, BdbC). Membrane translocation and cleavage of the precursor are probably performed by SunT.

The protein localises to the secreted. In terms of biological role, bacteriocin active against Gram-positive bacteria. Inhibits B.cereus spore outgrowth, after the germination stage, approximately 1000-fold better than it inhibits exponential growth of the same cells. Inhibits B.subtilis strain ATCC 6633. This is Bacteriocin sublancin-168 (sunA) from Bacillus pumilus (Bacillus mesentericus).